A 245-amino-acid polypeptide reads, in one-letter code: Cytochrome c oxidase subunit 2 (245 aa).

Topologically, residues 1-36 (MYMLNNMLNDVPTPWGMFFQDSATPNMEGMMELHNN) are mitochondrial intermembrane. The chain crosses the membrane as a helical span at residues 37 to 56 (VMFYLCMMLGFVSYMLYNML). Over 57–76 (TTYNHSVLPYKYLYHGQFIE) the chain is Mitochondrial matrix. The chain crosses the membrane as a helical span at residues 77-101 (IVWTTFPAMILLIIAFPSFILLYIC). The Mitochondrial intermembrane segment spans residues 102-245 (DEVIAPAMTI…GEFLAWIDEQ (144 aa)). Residues His180, Cys215, Glu217, Cys219, His223, and Met226 each contribute to the Cu cation site. Glu217 is a Mg(2+) binding site.

Belongs to the cytochrome c oxidase subunit 2 family. In terms of assembly, component of the cytochrome c oxidase (complex IV, CIV), a multisubunit enzyme composed of a catalytic core of 3 subunits and several supernumerary subunits. The complex exists as a monomer or a dimer and forms supercomplexes (SCs) in the inner mitochondrial membrane with ubiquinol-cytochrome c oxidoreductase (cytochrome b-c1 complex, complex III, CIII). The cofactor is Cu cation.

The protein localises to the mitochondrion inner membrane. The enzyme catalyses 4 Fe(II)-[cytochrome c] + O2 + 8 H(+)(in) = 4 Fe(III)-[cytochrome c] + 2 H2O + 4 H(+)(out). Component of the cytochrome c oxidase, the last enzyme in the mitochondrial electron transport chain which drives oxidative phosphorylation. The respiratory chain contains 3 multisubunit complexes succinate dehydrogenase (complex II, CII), ubiquinol-cytochrome c oxidoreductase (cytochrome b-c1 complex, complex III, CIII) and cytochrome c oxidase (complex IV, CIV), that cooperate to transfer electrons derived from NADH and succinate to molecular oxygen, creating an electrochemical gradient over the inner membrane that drives transmembrane transport and the ATP synthase. Cytochrome c oxidase is the component of the respiratory chain that catalyzes the reduction of oxygen to water. Electrons originating from reduced cytochrome c in the intermembrane space (IMS) are transferred via the dinuclear copper A center (CU(A)) of subunit 2 and heme A of subunit 1 to the active site in subunit 1, a binuclear center (BNC) formed by heme A3 and copper B (CU(B)). The BNC reduces molecular oxygen to 2 water molecules using 4 electrons from cytochrome c in the IMS and 4 protons from the mitochondrial matrix. This chain is Cytochrome c oxidase subunit 2 (COX2), found in Dekkera bruxellensis (Brettanomyces custersii).